We begin with the raw amino-acid sequence, 267 residues long: Phosphate import ATP-binding protein PstB 2 (267 aa).

In terms of domain architecture, ABC transporter spans 21 to 262 (LATKDLHVYY…AQCQSTNDYV (242 aa)). ATP is bound at residue 53–60 (GPSGCGKS).

This sequence belongs to the ABC transporter superfamily. Phosphate importer (TC 3.A.1.7) family. The complex is composed of two ATP-binding proteins (PstB), two transmembrane proteins (PstC and PstA) and a solute-binding protein (PstS).

It localises to the cell membrane. The enzyme catalyses phosphate(out) + ATP + H2O = ADP + 2 phosphate(in) + H(+). Functionally, part of the ABC transporter complex PstSACB involved in phosphate import. Responsible for energy coupling to the transport system. This Streptococcus pyogenes serotype M18 (strain MGAS8232) protein is Phosphate import ATP-binding protein PstB 2.